A 730-amino-acid polypeptide reads, in one-letter code: MSRRKISSESFSSLGSDYLETSPEEEGECPLSKLCWNGSRSPPGPPGSRAAAMAATPVPAASVAAAAAAVAAGSKRAQRRRRVNLDSLGESISLLTAPSPQTIHMTLKRTLQYYEHQVIGYRDAEKNFHNISNRCSSADHSNKEEIEDVSGILRCTANVLGLKFQEIQERFGEEFFKICFDENERVLRAVGSTLQDFFNGFDALLEHIRTSFGKQATLESPSFLCKELPEGTLKLHYFHPHHTVGFAMLGMIKAAGKRIYHLNVEVEQIENEKFCSDGSTPSNYSCLTFLIKECETTQITKNIPQGTSQIPTDLRISINTFCRTFPFHLMFDPNMVVLQLGEGLRKQLRCDNHKVLKFEDCFEIVSPKVNATFDRVLLRLSTPFVIRTKPEASGTDNEDKVMEIKGQMIHVPESNAILFLGSPCVDKLDELIGRGLHLSDIPIHDATRDVILVGEQAKAQDGLKKRMDKLKATLEKTHQALEEEKKKTVDLLYSIFPGDVAQQLWQRQQVQARKFDDVTMLFSDIVGFTAICAQCTPMQVISMLNELYTRFDHQCGFLDIYKVETIGDAYCVASGLHRKSLCHAKPIALMALKMMELSEEVLTPDGRPIQMRIGIHSGSVLAGVVGVRMPRYCLFGNNVTLASKFESGSHPRRINISPTTYQLLKREDSFTFIPRSREELPDNFPKEIPGVCYFLELRTGPKPPKPSLSSSRIKKVSYNIGTMFLRETSL.

The segment at 1 to 53 is disordered; the sequence is MSRRKISSESFSSLGSDYLETSPEEEGECPLSKLCWNGSRSPPGPPGSRAAAM. The region spanning 519–646 is the Guanylate cyclase domain; it reads TMLFSDIVGF…NNVTLASKFE (128 aa).

Belongs to the adenylyl cyclase class-4/guanylyl cyclase family. In terms of assembly, heterodimer of an alpha and a beta chain.

Its subcellular location is the cytoplasm. The catalysed reaction is GTP = 3',5'-cyclic GMP + diphosphate. With respect to regulation, activated by nitric oxide in the presence of magnesium or manganese ions. In terms of biological role, has guanylyl cyclase on binding to the beta-1 subunit. This chain is Guanylate cyclase soluble subunit alpha-2 (Gucy1a2), found in Rattus norvegicus (Rat).